The sequence spans 569 residues: Cationic amino acid transporter 9, chloroplastic (569 aa).

A chloroplast-targeting transit peptide spans 1–41 (MGGHEGFSNQRLSSATWFSHFRASALRSKSLPPPSSQTAVR). A run of 14 helical transmembrane segments spans residues 53 to 73 (GLFD…VFVV), 81 to 101 (AGPG…LNAL), 113 to 135 (VVGG…LVFV), 155 to 175 (YAVA…LWMG), 181 to 201 (LGGL…LTLV), 215 to 235 (VMTA…AFEI), 250 to 270 (AVLT…AVAN), 284 to 304 (IGIM…CLVL), 333 to 353 (ILIS…GLYV), 406 to 428 (HILS…ALRL), 444 to 464 (WQEG…AGVF), 467 to 487 (FSAS…ASAV), 502 to 522 (FSCP…IFLF), and 528 to 548 (EAWI…ALYG).

It belongs to the amino acid-polyamine-organocation (APC) superfamily. Cationic amino acid transporter (CAT) (TC 2.A.3.3) family. Expressed in roots, stems, flowers, and leaves.

The protein resides in the plastid. The protein localises to the chloroplast membrane. Functionally, permease involved in the transport of the cationic amino acids. In Arabidopsis thaliana (Mouse-ear cress), this protein is Cationic amino acid transporter 9, chloroplastic (CAT9).